Reading from the N-terminus, the 257-residue chain is Uroporphyrinogen-III C-methyltransferase (257 aa).

S-adenosyl-L-homocysteine-binding positions include proline 11, 87–89 (GGD), 117–118 (TS), and methionine 170.

Belongs to the precorrin methyltransferase family.

It catalyses the reaction uroporphyrinogen III + 2 S-adenosyl-L-methionine = precorrin-2 + 2 S-adenosyl-L-homocysteine + H(+). It participates in cofactor biosynthesis; adenosylcobalamin biosynthesis; precorrin-2 from uroporphyrinogen III: step 1/1. It functions in the pathway porphyrin-containing compound metabolism; siroheme biosynthesis; precorrin-2 from uroporphyrinogen III: step 1/1. Its function is as follows. Catalyzes the two successive C-2 and C-7 methylation reactions involved in the conversion of uroporphyrinogen III to precorrin-2 via the intermediate formation of precorrin-1. It is a step in the biosynthesis of both cobalamin (vitamin B12) and siroheme. In Bacillus subtilis (strain 168), this protein is Uroporphyrinogen-III C-methyltransferase (sumT).